A 925-amino-acid chain; its full sequence is Protein translocase subunit SecA (925 aa).

ATP is bound by residues Gln-87, 105–109 (GEGKT), and Asp-531. A disordered region spans residues 867 to 909 (AAGADMRFQHSQPESVLHKPEAGEGEEAQPFRRETPKVGRNDP). Over residues 895 to 906 (QPFRRETPKVGR) the composition is skewed to basic and acidic residues. Cys-910, Cys-912, Cys-921, and His-922 together coordinate Zn(2+).

The protein belongs to the SecA family. In terms of assembly, monomer and homodimer. Part of the essential Sec protein translocation apparatus which comprises SecA, SecYEG and auxiliary proteins SecDF-YajC and YidC. The cofactor is Zn(2+).

The protein resides in the cell inner membrane. It is found in the cytoplasm. The catalysed reaction is ATP + H2O + cellular proteinSide 1 = ADP + phosphate + cellular proteinSide 2.. Functionally, part of the Sec protein translocase complex. Interacts with the SecYEG preprotein conducting channel. Has a central role in coupling the hydrolysis of ATP to the transfer of proteins into and across the cell membrane, serving both as a receptor for the preprotein-SecB complex and as an ATP-driven molecular motor driving the stepwise translocation of polypeptide chains across the membrane. This is Protein translocase subunit SecA from Thioalkalivibrio sulfidiphilus (strain HL-EbGR7).